We begin with the raw amino-acid sequence, 295 residues long: GTPase Era (295 aa).

One can recognise an Era-type G domain in the interval 7-176 (KTVSVCIIGR…ITSKAKIAPW (170 aa)). A G1 region spans residues 15–22 (GRPNSGKS). 15–22 (GRPNSGKS) is a binding site for GTP. The segment at 41 to 45 (QTTRS) is G2. The G3 stretch occupies residues 62–65 (DTPG). GTP is bound by residues 62-66 (DTPGI) and 124-127 (NKID). Residues 124–127 (NKID) are G4. The G5 stretch occupies residues 152-154 (ISA). The 78-residue stretch at 204-281 (LQQELPYKLT…HLFLFVKVRE (78 aa)) folds into the KH type-2 domain.

It belongs to the TRAFAC class TrmE-Era-EngA-EngB-Septin-like GTPase superfamily. Era GTPase family. As to quaternary structure, monomer.

It is found in the cytoplasm. The protein localises to the cell inner membrane. Its function is as follows. An essential GTPase that binds both GDP and GTP, with rapid nucleotide exchange. Plays a role in 16S rRNA processing and 30S ribosomal subunit biogenesis and possibly also in cell cycle regulation and energy metabolism. The chain is GTPase Era from Rickettsia bellii (strain OSU 85-389).